A 147-amino-acid polypeptide reads, in one-letter code: Large ribosomal subunit protein uL15 (147 aa).

Basic residues predominate over residues 1–28; the sequence is MIRRRKKVRKLRGSHTHGWGCKKKHRGG. The disordered stretch occupies residues 1–43; the sequence is MIRRRKKVRKLRGSHTHGWGCKKKHRGGGSKGGRGMAGTGKRN. Over residues 29–38 the composition is skewed to gly residues; it reads GSKGGRGMAG.

It belongs to the universal ribosomal protein uL15 family. Part of the 50S ribosomal subunit.

Functionally, binds to the 23S rRNA. This is Large ribosomal subunit protein uL15 from Pyrococcus horikoshii (strain ATCC 700860 / DSM 12428 / JCM 9974 / NBRC 100139 / OT-3).